Reading from the N-terminus, the 87-residue chain is Long neurotoxin homolog (87 aa).

Residues 1–21 (MKTLLLTLVVVTIVCLDLGYT) form the signal peptide. Disulfide bonds link Cys24–Cys47, Cys27–Cys32, Cys40–Cys64, Cys68–Cys80, and Cys81–Cys86.

In terms of tissue distribution, expressed by the venom gland.

It localises to the secreted. Its function is as follows. Inhibits carbachol-induced muscle contraction in a reversible manner. The polypeptide is Long neurotoxin homolog (Bungarus multicinctus (Many-banded krait)).